A 61-amino-acid polypeptide reads, in one-letter code: Sperm protamine P1 (61 aa).

A disordered region spans residues 1-61; that stretch reads MARYRRRSRS…RRYSRRGRRR (61 aa).

The protein belongs to the protamine P1 family. In terms of tissue distribution, testis.

Its subcellular location is the nucleus. The protein localises to the chromosome. Protamines substitute for histones in the chromatin of sperm during the haploid phase of spermatogenesis. They compact sperm DNA into a highly condensed, stable and inactive complex. The protein is Sperm protamine P1 (PRM1) of Dasyurus hallucatus (Northern quoll).